The chain runs to 118 residues: uncharacterized protein (118 aa).

Its subcellular location is the mitochondrion. This is an uncharacterized protein from Arabidopsis thaliana (Mouse-ear cress).